The chain runs to 817 residues: Phospholipase D alpha 2 (817 aa).

The C2 domain occupies 1 to 130 (MAHLLLHGTL…LSGEAIERRL (130 aa)). Aspartate 192 is a Ca(2+) binding site. Positions 333–372 (YMITHHQKTVIVDHDMPVPRGGGSRRIVSFVGGLDLCDGR) constitute a PLD phosphodiesterase 1 domain. Catalysis depends on residues histidine 338, lysine 340, and aspartate 345. Residue histidine 338 participates in a 1,2-diacyl-sn-glycero-3-phosphate binding. Ca(2+) is bound by residues histidine 378 and histidine 412. The a 1,2-diacyl-sn-glycero-3-phosphate site is built by glutamine 529 and histidine 668. Positions 663 to 690 (FMIYVHSKMMIVDDEYIIVGSANINQRS) constitute a PLD phosphodiesterase 2 domain. Residues histidine 668, lysine 670, and aspartate 675 contribute to the active site. Glutamate 730 provides a ligand contact to Ca(2+).

Belongs to the phospholipase D family. C2-PLD subfamily. The cofactor is Ca(2+).

The enzyme catalyses a 1,2-diacyl-sn-glycero-3-phosphocholine + H2O = a 1,2-diacyl-sn-glycero-3-phosphate + choline + H(+). In terms of biological role, hydrolyzes glycerol-phospholipids at the terminal phosphodiesteric bond. Plays an important role in various cellular processes. The protein is Phospholipase D alpha 2 (PLD2) of Oryza sativa subsp. japonica (Rice).